Here is a 643-residue protein sequence, read N- to C-terminus: MNANPKFLSADAHVDAAAVAPLPNSRKVYVTGSQPDIRVPMREITQADTPTGFGGEKNPPIYVYDTSGPYTDPDAKIDIRAGLPALRQGWIEARGDTEVLDGLSSQYGLERAADPATADLRFPGLHRNPRRAQPGKNVTQMHYARQGIITPEMEYIAIRENQRRAEYIESLKSSGPNGAKLAAMMGRQHPGQAFGAAAFGANALAEITPEFVRDEVARGRAIIPANINHPESEPMIIGRNFLVKINANIGNSAVTSSIGEEVDKMTWAIRWGGDTVMDLSTGKHIHETREWIIRNSPVPIGTVPIYQALEKVNGKAEDLTWEIFRDTLIEQAEQGVDYFTIHAGVRLQYVPLTANRMTGIVSRGGSIMAKWCLAHHKESFLYEHFEEICEIMKAYDVSFSLGDGLRPGSIYDANDEAQLGELKTLGELTQIAWKHDVQVMIEGPGHVPMQLIKENMDLQLDWCKEAPFYTLGPLTTDIAPGYDHITSGIGAAMIGWFGTAMLCYVTPKEHLGLPNKDDVKEGIITYKLAAHAADLAKGHPGAQVRDNALSKARFEFRWEDQFNIGLDPDKAREFHDETLPKDSAKVAHFCSMCGPHFCSMKITQDVREFAAQQGVSETEALKKGMEVKAVEFVKTGAEIYHRQ.

Substrate contacts are provided by residues asparagine 248, methionine 277, tyrosine 306, histidine 342, 362–364 (SRG), 403–406 (DGLR), and glutamate 442. Zn(2+) is bound at residue histidine 446. A substrate-binding site is contributed by tyrosine 469. Histidine 510 provides a ligand contact to Zn(2+). The [4Fe-4S] cluster site is built by cysteine 590, cysteine 593, and cysteine 598.

The protein belongs to the ThiC family. In terms of assembly, homodimer. It depends on [4Fe-4S] cluster as a cofactor.

The enzyme catalyses 5-amino-1-(5-phospho-beta-D-ribosyl)imidazole + S-adenosyl-L-methionine = 4-amino-2-methyl-5-(phosphooxymethyl)pyrimidine + CO + 5'-deoxyadenosine + formate + L-methionine + 3 H(+). Its pathway is cofactor biosynthesis; thiamine diphosphate biosynthesis. Its function is as follows. Catalyzes the synthesis of the hydroxymethylpyrimidine phosphate (HMP-P) moiety of thiamine from aminoimidazole ribotide (AIR) in a radical S-adenosyl-L-methionine (SAM)-dependent reaction. The protein is Phosphomethylpyrimidine synthase of Burkholderia ambifaria (strain MC40-6).